A 110-amino-acid polypeptide reads, in one-letter code: Large ribosomal subunit protein uL22 (110 aa).

Belongs to the universal ribosomal protein uL22 family. As to quaternary structure, part of the 50S ribosomal subunit.

This protein binds specifically to 23S rRNA; its binding is stimulated by other ribosomal proteins, e.g. L4, L17, and L20. It is important during the early stages of 50S assembly. It makes multiple contacts with different domains of the 23S rRNA in the assembled 50S subunit and ribosome. Its function is as follows. The globular domain of the protein is located near the polypeptide exit tunnel on the outside of the subunit, while an extended beta-hairpin is found that lines the wall of the exit tunnel in the center of the 70S ribosome. The protein is Large ribosomal subunit protein uL22 of Photorhabdus laumondii subsp. laumondii (strain DSM 15139 / CIP 105565 / TT01) (Photorhabdus luminescens subsp. laumondii).